The chain runs to 597 residues: MKLILFLSGLVSLVLCTLAAPTGDQKEIHTETPPPKKPSETTTPGALKTPQPEPKDEEPTPGAFQGDMMLTEDQQRESKEAIDDEMTGRKKRKATIYESQRWPYKVIPYVISPSSSGQSSLIRNAMDHWEQNTCLRFEPRTSSHSRQLGHNAYLSFFRGSGCWSYVGKAFNGEQQISIGNGCAYFGTIVHEIGHAIGFHHEQSRPDRDDYINVLYQNIQSGRQHNFAKYTWGRVTSRNVEYDVGSIMHYGGYGFSSNGRPTITTRDPRLNSRLGQRIALSPADIELANLIYECDDIEDCAGANECLNGGYHDTECNCVCPSGYNGDLCEDAVTTTRPDCSERFTEMTGVITSPNWPGRYEDNMACVYQIEGPPGSTIELTFTEMNIENHAACRYDAVEVRKDDINSDGEKFCGNTLPAVQISSGNQMLISFTSDPSITGRGFRATYRIVILTTTQIPDTTTISTTTPVPTTTQATTDETVVGSCGGSFGGTQGRVATPNYPNNYDNDLECVYVIEVEIGRRVELDFIDFVLEDETNCRWDSLSINLGDGIKIDMKMCGREYPAASLVSIGNNMELTLISDRSVTDRGFMADYRAIDL.

A signal peptide spans 1–16 (MKLILFLSGLVSLVLC). Positions 17–93 (TLAAPTGDQK…DEMTGRKKRK (77 aa)) are cleaved as a propeptide — activation peptide. The interval 24 to 67 (DQKEIHTETPPPKKPSETTTPGALKTPQPEPKDEEPTPGAFQGD) is disordered. The region spanning 93–294 (KATIYESQRW…ELANLIYECD (202 aa)) is the Peptidase M12A domain. Disulfide bonds link cysteine 134–cysteine 293, cysteine 162–cysteine 182, cysteine 299–cysteine 315, cysteine 305–cysteine 317, cysteine 319–cysteine 328, cysteine 339–cysteine 365, cysteine 392–cysteine 412, cysteine 484–cysteine 510, and cysteine 537–cysteine 557. Residue histidine 190 participates in Zn(2+) binding. Glutamate 191 is a catalytic residue. The Zn(2+) site is built by histidine 194 and histidine 200. Residues 295–329 (DIEDCAGANECLNGGYHDTECNCVCPSGYNGDLCE) enclose the EGF-like domain. 2 consecutive CUB domains span residues 339-449 (CSER…YRIV) and 484-595 (CGGS…YRAI).

The cofactor is Zn(2+).

The protein resides in the cytoplasm. The protein localises to the perinuclear region. Its subcellular location is the cell cortex. It is found in the secreted. It localises to the extracellular space. Could be involved in the differentiation of ectodermal lineages and subsequent patterning of the embryo. This is Blastula protease 10 (BP10) from Paracentrotus lividus (Common sea urchin).